Reading from the N-terminus, the 629-residue chain is MTDSFYRYDVIVIGAGHAGSEAALAAARTGAHTLLLTHNIETIGAMSCNPAIGGIGKGHLVKEIDALGGAMAHAADAAGIQWRTLNASKGPAVRATRCQADRSLYRAAIRQMIEGQARLNIFQAEVDDLLFEGDTVCGAITHTGLHFKAPAVVLTAGTFLAGKIHIGPTQYAAGRMGDPPATMLAARLRERLLTVARLKTGTPPRIDGRTLNYTAMQEQPGDAPRPTMSFIGNSASHPPQVSCWITQTTERTHEIIRAALHRSPLYSGQIEGTGPRYCPSIEDKVVRFAEKNSHQIFVEPEGLNVIDIYPNGISTSLPFDVQLELVRSIRGFEQAHITRPGYAIEYDFFDPRGLKASLETKAIAGLFFAGQINGTTGYEEAAAQGLLAGLNAARHVRGLSSWTPRRDQAYLGVLVDDLITHGTNEPYRMFTSRAEYRLQLREDNADARLTAIGRDLGLVDDARWAHFNAKQEAVARECGRLSALWATPGNALGREVKETLGVTLSRETNIIDLMKRPELDYAALMRVPSLGPGVDDAQVAEQVEISVKYAGYLNRQSEEITRQQRHEATAIPLEFDYAAVRGLSTEVLQKLQHIQPQTVGQAQRIPGMTPAAISLLLVHLERMRRNRVA.

14 to 19 (GAGHAG) serves as a coordination point for FAD. 274–288 (GPRYCPSIEDKVVRF) is an NAD(+) binding site.

This sequence belongs to the MnmG family. As to quaternary structure, homodimer. Heterotetramer of two MnmE and two MnmG subunits. Requires FAD as cofactor.

Its subcellular location is the cytoplasm. Functionally, NAD-binding protein involved in the addition of a carboxymethylaminomethyl (cmnm) group at the wobble position (U34) of certain tRNAs, forming tRNA-cmnm(5)s(2)U34. The chain is tRNA uridine 5-carboxymethylaminomethyl modification enzyme MnmG from Xylella fastidiosa (strain Temecula1 / ATCC 700964).